A 654-amino-acid chain; its full sequence is 4-hydroxy-3-methylbut-2-en-1-yl diphosphate synthase (flavodoxin) (654 aa).

[4Fe-4S] cluster is bound by residues cysteine 557, cysteine 560, cysteine 591, and glutamate 598.

This sequence belongs to the IspG family. It depends on [4Fe-4S] cluster as a cofactor.

The catalysed reaction is (2E)-4-hydroxy-3-methylbut-2-enyl diphosphate + oxidized [flavodoxin] + H2O + 2 H(+) = 2-C-methyl-D-erythritol 2,4-cyclic diphosphate + reduced [flavodoxin]. The protein operates within isoprenoid biosynthesis; isopentenyl diphosphate biosynthesis via DXP pathway; isopentenyl diphosphate from 1-deoxy-D-xylulose 5-phosphate: step 5/6. Functionally, converts 2C-methyl-D-erythritol 2,4-cyclodiphosphate (ME-2,4cPP) into 1-hydroxy-2-methyl-2-(E)-butenyl 4-diphosphate. This chain is 4-hydroxy-3-methylbut-2-en-1-yl diphosphate synthase (flavodoxin), found in Protochlamydia amoebophila (strain UWE25).